Here is a 2784-residue protein sequence, read N- to C-terminus: Cilia- and flagella-associated protein 46 (2784 aa).

One copy of the TPR 1 repeat lies at 129–162 (GLEVAAANQPRYQFLVYNASVHHWRVVAPLHRDG). The stretch at 242 to 268 (TAAAAKLTELQKDVARLQVHLATLAAA) forms a coiled coil. The TPR 2 repeat unit spans residues 401 to 434 (SLAPVVVAAHVKALEQLEDVLTTFTKLADVEGIH). Disordered regions lie at residues 543–562 (SAEP…RSKE) and 581–607 (RDLP…AAAR). Residues 585-595 (HPPPPAPTDPP) show a composition bias toward pro residues. Residues 644–665 (AVDREMVLLQAQLAHYEAEAAI) adopt a coiled-coil conformation. Residues 670-697 (RRRADISPPTRPSPPEVDGEGVRQPPAT) form a disordered region. One copy of the TPR 3 repeat lies at 708–743 (ASVRSMRGAMSVNEPWLTLNNAVQLYNAALPLMQQH). Disordered stretches follow at residues 799 to 837 (DAGQ…PAYK) and 929 to 954 (RVNE…KPHG). The span at 802–817 (QELEDDDDEDSLDEDG) shows a compositional bias: acidic residues. The TPR 4 repeat unit spans residues 976-1009 (LELWAKMARAVADAGVWPAALECSAAALAALPGA). Residues 1275–1288 (TGDLDGDGTDDEDD) show a composition bias toward acidic residues. 2 disordered regions span residues 1275-1351 (TGDL…RVPE) and 1640-1673 (AAGG…HGQL). The span at 1298–1311 (SGGGSSSGRAGGGF) shows a compositional bias: gly residues. Over residues 1646–1658 (GGRESPSPHDDGI) the composition is skewed to basic and acidic residues. TPR repeat units follow at residues 1712 to 1745 (HDVW…AADC) and 1854 to 1886 (MEML…LAAR). Residues 1961–1984 (RLAEVQLAAAEERERLAGADREKA) adopt a coiled-coil conformation. Disordered regions lie at residues 2068-2112 (RPFV…EAAA), 2278-2303 (ATAE…PAAA), 2346-2389 (AAKG…PGAA), and 2441-2465 (LPLP…AGPT). A compositionally biased stretch (pro residues) spans 2069 to 2083 (PFVPPPKPPGAPKRP). Acidic residues predominate over residues 2087-2096 (AEEEEDEEGP). A compositionally biased stretch (low complexity) spans 2097 to 2112 (DTAAADAAAEAAEAAA). The span at 2378–2389 (SKQGPKSGPGAA) shows a compositional bias: low complexity. A compositionally biased stretch (basic and acidic residues) spans 2450–2461 (DGKKEKKDKKEA). The TPR 7 repeat unit spans residues 2613-2646 (ATGGPCTGLLFLGVGRFAAHVPPAVLASAPLGGC).

The protein belongs to the CFAP46 family. As to quaternary structure, part of the PDCP1 complex composed of CFAP46, CFAP54, CFAP74 and CFAP221; the PDCP1 complex binds calmodulin.

Its subcellular location is the cytoplasm. It is found in the cytoskeleton. The protein resides in the cilium axoneme. Its function is as follows. As part of the central apparatus of the cilium axoneme plays a role in cilium movement and thereby cell motility. The sequence is that of Cilia- and flagella-associated protein 46 from Chlamydomonas reinhardtii (Chlamydomonas smithii).